We begin with the raw amino-acid sequence, 650 residues long: Alpha-agglutinin (650 aa).

Residues 1 to 19 (MFTFLKIILWLFSLALASA) form the signal peptide. N-linked (GlcNAc...) asparagine glycans are attached at residues asparagine 79, asparagine 109, asparagine 135, and asparagine 248. Cysteine 97 and cysteine 114 are disulfide-bonded. Cysteine 202 and cysteine 300 are disulfide-bonded. The tract at residues 216 to 322 (YDSSNNNVDL…FSTTREFIVY (107 aa)) is ig-like fold domain important for alpha-agglutinin activity, contributing to a functional binding site for a-agglutinin. O-linked (Man...) serine glycosylation is present at serine 282. Threonine 289, threonine 299, and threonine 303 each carry an O-linked (Man...) threonine glycan. An N-linked (GlcNAc...) asparagine glycan is attached at asparagine 306. Residues threonine 307, threonine 308, and threonine 311 are each glycosylated (O-linked (Man...) threonine). O-linked (Man...) serine glycosylation is present at serine 314. O-linked (Man...) threonine glycans are attached at residues threonine 315, threonine 316, and threonine 329. Serine 331, serine 334, serine 335, and serine 338 each carry an O-linked (Man...) serine glycan. Threonine 339, threonine 340, threonine 341, threonine 342, and threonine 345 each carry an O-linked (Man...) threonine glycan. 2 tandem repeats follow at residues 339–378 (TTTTDLTSINTSAYSTGSISTVETGNRTTSEVISHVVTTS) and 384–423 (TATTSLTIAQTSIYSTDSNITVGTDIHTTSEVISDVETIS). The segment at 339–423 (TTTTDLTSIN…EVISDVETIS (85 aa)) is 2 X 40 AA tandem repeats. O-linked (Man...) serine glycosylation occurs at serine 346. A glycan (O-linked (Man...) threonine) is linked at threonine 349. Serine 350 is a glycosylation site (O-linked (Man...) serine). 5 N-linked (GlcNAc...) asparagine glycosylation sites follow: asparagine 364, asparagine 402, asparagine 485, asparagine 501, and asparagine 614. Glycine 627 is lipidated: GPI-anchor amidated glycine. Residues 628-650 (KASIFFSAELGSIIFLLLSYLLF) constitute a propeptide, removed in mature form.

To C.albicans ALS1. In terms of assembly, interacts with AGA2. Post-translationally, N-glycosylated, and O-glycosylated by both PMT1 and PMT2. In terms of processing, the GPI-anchor is attached to the protein in the endoplasmic reticulum and serves to target the protein to the cell surface. There, the glucosamine-inositol phospholipid moiety is cleaved off and the GPI-modified mannoprotein is covalently attached via its lipidless GPI glycan remnant to the 1,6-beta-glucan of the outer cell wall layer.

The protein resides in the secreted. It localises to the cell wall. The protein localises to the membrane. Cell surface glycoprotein promoting cell-cell contact to facilitate mating. S.cerevisiae A and alpha cells express the complementary cell surface glycoproteins A-agglutinin and alpha-, respectively, which interact with one another to promote cellular aggregation during mating. The polypeptide is Alpha-agglutinin (SAG1) (Saccharomyces cerevisiae (strain ATCC 204508 / S288c) (Baker's yeast)).